A 171-amino-acid chain; its full sequence is MTTRQSSFSYEEILTCGRGEMFGSGNAQLPLPPMLMFNRITEISETGGPHDKGFVRAEFDITPDLWFFPCHFMGDPVMPGCLGLDAMWQLTGFFLGWLGEPGKGRALSTGEVKFTGMVTPKTKLVEYGIDFKRVMRGRLVLGIADGWMKADGEVIYKATDLRVGLFQEKAD.

The active site involves H71.

It belongs to the thioester dehydratase family. FabA subfamily. As to quaternary structure, homodimer.

The protein localises to the cytoplasm. The catalysed reaction is a (3R)-hydroxyacyl-[ACP] = a (2E)-enoyl-[ACP] + H2O. The enzyme catalyses (3R)-hydroxydecanoyl-[ACP] = (2E)-decenoyl-[ACP] + H2O. It carries out the reaction (2E)-decenoyl-[ACP] = (3Z)-decenoyl-[ACP]. It participates in lipid metabolism; fatty acid biosynthesis. In terms of biological role, necessary for the introduction of cis unsaturation into fatty acids. Catalyzes the dehydration of (3R)-3-hydroxydecanoyl-ACP to E-(2)-decenoyl-ACP and then its isomerization to Z-(3)-decenoyl-ACP. Can catalyze the dehydratase reaction for beta-hydroxyacyl-ACPs with saturated chain lengths up to 16:0, being most active on intermediate chain length. This is 3-hydroxydecanoyl-[acyl-carrier-protein] dehydratase from Sinorhizobium fredii (strain NBRC 101917 / NGR234).